The chain runs to 199 residues: Recombination protein RecR (199 aa).

Residues 57–72 (CSICFNLTDTDPCAIC) form a C4-type zinc finger. One can recognise a Toprim domain in the interval 80–175 (RLLMVVEEAK…KVTRIAHGLP (96 aa)).

Belongs to the RecR family.

May play a role in DNA repair. It seems to be involved in an RecBC-independent recombinational process of DNA repair. It may act with RecF and RecO. This chain is Recombination protein RecR, found in Carboxydothermus hydrogenoformans (strain ATCC BAA-161 / DSM 6008 / Z-2901).